A 91-amino-acid chain; its full sequence is Small ribosomal subunit protein uS15 (91 aa).

The protein belongs to the universal ribosomal protein uS15 family. Part of the 30S ribosomal subunit. Forms a bridge to the 50S subunit in the 70S ribosome, contacting the 23S rRNA.

In terms of biological role, one of the primary rRNA binding proteins, it binds directly to 16S rRNA where it helps nucleate assembly of the platform of the 30S subunit by binding and bridging several RNA helices of the 16S rRNA. Functionally, forms an intersubunit bridge (bridge B4) with the 23S rRNA of the 50S subunit in the ribosome. This is Small ribosomal subunit protein uS15 from Rickettsia canadensis (strain McKiel).